The chain runs to 454 residues: uncharacterized protein (454 aa).

The TRAM domain occupies 1–45 (MAAEGKAIAKVNDLVIFVPYVVPGDVVDLQIKRKKNKYAEAEAVK). [4Fe-4S] cluster contacts are provided by cysteine 58, cysteine 64, cysteine 67, and cysteine 160. The S-adenosyl-L-methionine site is built by glutamine 286, tyrosine 315, glutamate 336, and aspartate 385. Cysteine 412 functions as the Nucleophile in the catalytic mechanism.

It belongs to the class I-like SAM-binding methyltransferase superfamily. RNA M5U methyltransferase family.

This is an uncharacterized protein from Bacteroides thetaiotaomicron (strain ATCC 29148 / DSM 2079 / JCM 5827 / CCUG 10774 / NCTC 10582 / VPI-5482 / E50).